Here is a 118-residue protein sequence, read N- to C-terminus: Large ribosomal subunit protein bL20 (118 aa).

This sequence belongs to the bacterial ribosomal protein bL20 family.

Binds directly to 23S ribosomal RNA and is necessary for the in vitro assembly process of the 50S ribosomal subunit. It is not involved in the protein synthesizing functions of that subunit. The protein is Large ribosomal subunit protein bL20 of Buchnera aphidicola subsp. Acyrthosiphon pisum (strain 5A).